The following is a 480-amino-acid chain: Aspartyl/glutamyl-tRNA(Asn/Gln) amidotransferase subunit B (480 aa).

The protein belongs to the GatB/GatE family. GatB subfamily. In terms of assembly, heterotrimer of A, B and C subunits.

The catalysed reaction is L-glutamyl-tRNA(Gln) + L-glutamine + ATP + H2O = L-glutaminyl-tRNA(Gln) + L-glutamate + ADP + phosphate + H(+). It carries out the reaction L-aspartyl-tRNA(Asn) + L-glutamine + ATP + H2O = L-asparaginyl-tRNA(Asn) + L-glutamate + ADP + phosphate + 2 H(+). Allows the formation of correctly charged Asn-tRNA(Asn) or Gln-tRNA(Gln) through the transamidation of misacylated Asp-tRNA(Asn) or Glu-tRNA(Gln) in organisms which lack either or both of asparaginyl-tRNA or glutaminyl-tRNA synthetases. The reaction takes place in the presence of glutamine and ATP through an activated phospho-Asp-tRNA(Asn) or phospho-Glu-tRNA(Gln). In Streptococcus pneumoniae serotype 2 (strain D39 / NCTC 7466), this protein is Aspartyl/glutamyl-tRNA(Asn/Gln) amidotransferase subunit B.